Consider the following 375-residue polypeptide: Aldehyde reductase FrzD (375 aa).

A61, Q103, and H171 together coordinate FMN. Y176 functions as the Proton donor in the catalytic mechanism. Residues K223, G294, and R319 each coordinate FMN.

Belongs to the NADH:flavin oxidoreductase/NADH oxidase family. FMN is required as a cofactor.

The enzyme catalyses (1S,4S)-4-[(4-hydroxyphenyl)methyl]-2,5-diazaspiro[bicyclo[3.2.1]octane-6,1'-cyclohexane]-2',5'-dien-4'-one + 2 NADPH + 2 H(+) = (1S,4S)-4-[(4-hydroxyphenyl)methyl]-2,5-diazaspiro[bicyclo[3.2.1]octane-6,1'-cyclohexan]-4'-one + 2 NADP(+). The protein operates within alkaloid biosynthesis; ergot alkaloid biosynthesis. In terms of biological role, aldehyde reductase; part of the gene cluster that mediates the biosynthesis of the alkaloid (-)-FR901483, a potent immunosuppressant that shows efficacy in animal models and a probable inhibitor of purine nucleotide biosynthesis by targeting phosphoribosylpyrophosphate amidotransferase (PPAT). Within the pathway, FrzD reduces the dienone portion of the pathway intermediates to cyclohexanone. The biosynthesis of (-)-FR901483 starts with the condensation of two L-tyrosines to yield (S,S)-dityrosyl-piperazine. This process occurs in 3 steps with the non-canonical nonribosomal peptide synthetase FrzA catalyzing the reduction of L-tyrosine into L-tyrosinal, the spontaneous condensation of 2 L-tyrosinal units, and the subsequent reduction by the NmrA-like family domain-containing oxidoreductase FrzB. The cytochrome P450 monooxygenase FrzC then performs coupling between N10 and C1' to morph the piperazine into a 1,4-diazabicyclo[3.2.1]octane spiro-fused to a 2,5-cyclohexadienone. The dienone portion is further reduced to cyclohexanone by the flavin-dependent reductase FrzD. The methyltranserases (MTs) FrzE and FrzF are then involved in the methylation at the C10' amine and the C4 phenolic oxygen, respectively. The order of the two MTs appear to be interchangeable. Cleavage of the C9-N10' bond by the dioxygenase FrzG then leads to formation of a conjugated iminium. In addition to the oxidation of C9, an additional dehydrogenation between C7 and C8 can occur to give a likely shunt product. The next biosynthetic step is the intramolecular aldol condensation catalyzed by the newly identified aldolase FrzH to yield an aza-tricyclic product with the formation of a C9-C3' bond. The short-chain dehydrogenase/reductase FrzI then produces dephospho-(-)-FR901483 that is phosphorylated at C4'-OH into (-)-FR901483 by the phosphotransferase FrzJ. The only unassigned enzyme in the cluster is the second cytochrome P450 monooxygenase FrzL. This Cladobotryum sp protein is Aldehyde reductase FrzD.